The following is a 339-amino-acid chain: Cobalt-precorrin-5B C(1)-methyltransferase (339 aa).

Belongs to the CbiD family.

The enzyme catalyses Co-precorrin-5B + S-adenosyl-L-methionine = Co-precorrin-6A + S-adenosyl-L-homocysteine. The protein operates within cofactor biosynthesis; adenosylcobalamin biosynthesis; cob(II)yrinate a,c-diamide from sirohydrochlorin (anaerobic route): step 6/10. Catalyzes the methylation of C-1 in cobalt-precorrin-5B to form cobalt-precorrin-6A. The protein is Cobalt-precorrin-5B C(1)-methyltransferase of Methanosarcina acetivorans (strain ATCC 35395 / DSM 2834 / JCM 12185 / C2A).